The sequence spans 207 residues: MATYAAFKHVELYNVGKAKKRVLRAPGGGSSDIFGSDMPQTPRNVKNRMASNIFSADKDAAQKNNVRQGAHRFYFIGDAPRRGQKPVDSYSRLFGEPARPITPGKNHMKSSIPFGQNTNAAQQLLANNKGKYNGKSGSVSSASSSVSSSTENLKINVGNRSDGNPVTGEGYKAGGNDYIQPTAAMNGGNQVINKNRVPPGGYSSGLW.

At serine 30 the chain carries Phosphoserine. Residues threonine 41 and threonine 102 each carry the phosphothreonine modification. A phosphoserine mark is found at serine 111, serine 138, and serine 149. Disordered stretches follow at residues 129–174 and 188–207; these read KGKY…YKAG and GNQVINKNRVPPGGYSSGLW. Residues 136 to 149 are compositionally biased toward low complexity; that stretch reads SGSVSSASSSVSSS. Positions 150-164 are enriched in polar residues; sequence TENLKINVGNRSDGN.

The protein belongs to the MAP Jupiter family.

Its subcellular location is the nucleus. It is found in the cytoplasm. The protein localises to the cytoskeleton. The protein resides in the spindle. In terms of biological role, binds to all microtubule populations. In Drosophila grimshawi (Hawaiian fruit fly), this protein is Microtubule-associated protein Jupiter.